A 332-amino-acid chain; its full sequence is Ribosomal RNA small subunit methyltransferase H (332 aa).

S-adenosyl-L-methionine is bound by residues Gly34 to His36, Asp59, Phe86, Asp112, and Gln119.

Belongs to the methyltransferase superfamily. RsmH family.

The protein resides in the cytoplasm. It carries out the reaction cytidine(1402) in 16S rRNA + S-adenosyl-L-methionine = N(4)-methylcytidine(1402) in 16S rRNA + S-adenosyl-L-homocysteine + H(+). Functionally, specifically methylates the N4 position of cytidine in position 1402 (C1402) of 16S rRNA. This chain is Ribosomal RNA small subunit methyltransferase H, found in Chlorobium phaeobacteroides (strain BS1).